The chain runs to 372 residues: Alanine racemase (372 aa).

The active-site Proton acceptor; specific for D-alanine is the Lys-33. At Lys-33 the chain carries N6-(pyridoxal phosphate)lysine. Arg-131 is a binding site for substrate. Catalysis depends on Tyr-261, which acts as the Proton acceptor; specific for L-alanine. Residue Met-309 participates in substrate binding.

Belongs to the alanine racemase family. Requires pyridoxal 5'-phosphate as cofactor.

It catalyses the reaction L-alanine = D-alanine. Its pathway is amino-acid biosynthesis; D-alanine biosynthesis; D-alanine from L-alanine: step 1/1. Functionally, catalyzes the interconversion of L-alanine and D-alanine. May also act on other amino acids. The protein is Alanine racemase (alr) of Salinispora arenicola (strain CNS-205).